A 76-amino-acid chain; its full sequence is Exodeoxyribonuclease 7 small subunit (76 aa).

It belongs to the XseB family. As to quaternary structure, heterooligomer composed of large and small subunits.

The protein resides in the cytoplasm. The enzyme catalyses Exonucleolytic cleavage in either 5'- to 3'- or 3'- to 5'-direction to yield nucleoside 5'-phosphates.. Bidirectionally degrades single-stranded DNA into large acid-insoluble oligonucleotides, which are then degraded further into small acid-soluble oligonucleotides. This Geobacter sulfurreducens (strain ATCC 51573 / DSM 12127 / PCA) protein is Exodeoxyribonuclease 7 small subunit.